Here is a 792-residue protein sequence, read N- to C-terminus: Zinc finger protein 606 (792 aa).

The 72-residue stretch at 62–133 (VTFKDVAVDF…EQACPQRTCP (72 aa)) folds into the KRAB domain. A C2H2-type 1; degenerate zinc finger spans residues 289 to 311 (FKCTDAVKSFNHIIHFGDHKGIH). The C2H2-type 2; degenerate zinc-finger motif lies at 317 to 344 (YEYKECHQIFNQSPSFNEHPRLHVGENQ). Residues 400–422 (YDYNECGTSFIWSSYLIQHKKTH) form a C2H2-type 3; degenerate zinc finger. 13 consecutive C2H2-type zinc fingers follow at residues 428–450 (YECD…ERTH), 456–478 (YECN…KRIH), 484–506 (YVCN…QRTH), 512–534 (FECT…MRMH), 540–562 (FKCD…ERTH), 568–590 (YKCT…QRTH), 596–618 (YNCQ…EIIH), 624–646 (YECN…QRTH), 652–674 (YECN…RRIH), 680–702 (YKCN…RRTH), 708–730 (YRCN…LRNH), 736–758 (YKCN…QRMH), and 764–786 (FICS…QRNH).

The protein belongs to the krueppel C2H2-type zinc-finger protein family. In terms of tissue distribution, widely expressed in adult and fetal tissues.

The protein localises to the nucleus. In terms of biological role, may act as a transcriptional repressor. This chain is Zinc finger protein 606 (ZNF606), found in Homo sapiens (Human).